Consider the following 1186-residue polypeptide: MYND-type zinc finger-containing chromatin reader ZMYND8 (1186 aa).

Residues M1 to S12 show a composition bias toward basic and acidic residues. Residues M1–E57 form a disordered region. Positions M1–Q850 are required for interaction with CCNT1. S12 is covalently cross-linked (Glycyl lysine isopeptide (Lys-Gly) (interchain with G-Cter in SUMO2)). Phosphoserine is present on S24. Glycyl lysine isopeptide (Lys-Gly) (interchain with G-Cter in SUMO2) cross-links involve residues K56 and K70. An interaction with histone H3K4me0 region spans residues T75–N268. The segment at T75 to S406 is interaction with histone H3K14ac. The PHD-type zinc finger occupies D88–I133. Positions D88 to E327 are required for interaction with histone H3 and histone H4. Zn(2+) is bound by residues C91, C94, C103, C106, H111, C114, C127, and C130. Residues A145 to I252 enclose the Bromo domain. Positions 255, 258, and 274 each coordinate Zn(2+). In terms of domain architecture, PWWP spans P277–E327. K390 is covalently cross-linked (Glycyl lysine isopeptide (Lys-Gly) (interchain with G-Cter in SUMO2)). Phosphothreonine is present on T404. A Phosphoserine modification is found at S406. Residues S412–T512 are disordered. Residue K413 is modified to N6-acetyllysine; alternate. K413 is covalently cross-linked (Glycyl lysine isopeptide (Lys-Gly) (interchain with G-Cter in SUMO2); alternate). Residues S417, S425, and S432 each carry the phosphoserine modification. Residues P433–T442 are compositionally biased toward polar residues. S444 is modified (phosphoserine). Residue K453 forms a Glycyl lysine isopeptide (Lys-Gly) (interchain with G-Cter in SUMO2) linkage. 6 positions are modified to phosphoserine: S460, S462, S465, S486, S490, and S495. A compositionally biased stretch (polar residues) spans S472 to G489. K505 participates in a covalent cross-link: Glycyl lysine isopeptide (Lys-Gly) (interchain with G-Cter in SUMO2). Residues S514 and S523 each carry the phosphoserine modification. K530 participates in a covalent cross-link: Glycyl lysine isopeptide (Lys-Gly) (interchain with G-Cter in SUMO2). At T541 the chain carries Phosphothreonine. S547 is subject to Phosphoserine. K549 participates in a covalent cross-link: Glycyl lysine isopeptide (Lys-Gly) (interchain with G-Cter in SUMO2). T563 is modified (phosphothreonine). A disordered region spans residues T582–I884. Basic and acidic residues-rich tracts occupy residues E585–S597 and D606–A631. Residues K611 and K645 each participate in a glycyl lysine isopeptide (Lys-Gly) (interchain with G-Cter in SUMO2) cross-link. 2 positions are modified to phosphoserine: S652 and S655. Basic and acidic residues predominate over residues E656–T696. Residue K657 forms a Glycyl lysine isopeptide (Lys-Gly) (interchain with G-Cter in SUMO2) linkage. A phosphoserine mark is found at S668, S682, S707, S709, and S737. Basic and acidic residues predominate over residues G718–P738. T746 carries the phosphothreonine modification. Phosphoserine occurs at positions 754 and 756. The span at S766 to V799 shows a compositional bias: low complexity. The segment covering V818 to W832 has biased composition (polar residues). Residues Q835–Q857 show a composition bias toward low complexity. The segment covering K873–I884 has biased composition (polar residues). The interval I875–D1047 is required for homodimerization. C1028, C1031, C1039, C1040, C1046, C1050, H1058, and C1062 together coordinate Zn(2+). Residues C1028–C1062 form an MYND-type zinc finger. The interval C1028–C1062 is required for recruitment to DNA damage sites and for interaction with the NuRD complex, CHD4, HDAC1, HDAC2 and KDM1A. The interval Q1071–D1186 is disordered. Low complexity predominate over residues S1085–A1103. The segment covering S1104–E1116 has biased composition (basic and acidic residues). A Glycyl lysine isopeptide (Lys-Gly) (interchain with G-Cter in SUMO2) cross-link involves residue K1115. S1119 bears the Phosphoserine mark. Over residues L1121–G1140 the composition is skewed to polar residues. Residue S1141 is modified to Phosphoserine. The tract at residues N1147 to D1186 is interaction with PRKCB1. Basic and acidic residues-rich tracts occupy residues S1154 to H1165 and L1175 to D1186.

In terms of assembly, monomer and homodimer. Interacts with NuRD subcomplexes containing GATAD2A. Interacts with the histone deacetylase NuRD complex subunit CHD4; the interaction is direct, appears to occur with monomeric ZMYND8, and is increased following DNA damage. Interacts (via N-terminus) with the P-TEFb complex subunit CCNT1 (via central region); the interaction is direct and the association appears to occur between homodimeric ZMYND8 and the activated form of the P-TEFb complex. Interacts (via N-terminus) with DBN1 (via ADF-H domain); the interaction leads to sequestering of ZMYND8 in the cytoplasm. Interacts with the P-TEFb complex subunit CDK9; the association appears to occur between homodimeric ZMYND8 and the activated form of the P-TEFb complex. Interacts with EZH2; the interaction is dependent on the presence of chromatin. Interacts (via MYND domain) with the NuRD complex subunit GATAD2A. Interacts with histone H3 (via N-terminus) that is both methylated at 'Lys-4' (H3K4me1) and acetylated at 'Lys-14' (H3K14ac), with histone H3 (via N-terminus) unmodified at 'Lys-4' (H3K4me0) and acetylated at 'Lys-14' (H3K14ac), and with histone H3 (via N-terminus) di-methylated at 'Lys-36' (H3K36me2). Interacts (via Bromo domain) with histone H4 acetylated at 'Lys-16' (H4K16ac). Interacts with HDAC1. Interacts with HDAC2. Interacts with KDM1A. Interacts with KDM5C. Interacts with KDM5D. Interacts in vitro with PRKCB. Interacts with RNA polymerase II subunit POLR2A phosphorylated at 'Ser-5'. Interacts with ZNF592. Interacts with ZNF687. Does not interact with GATAD2B. Expressed in neurons (at protein level). Absent in astrocytes (at protein level). Expressed in all tissues examined with highest expression in brain, lung, pancreas, and placenta. Expressed in cutaneous T-cell lymphomas (CTCL).

The protein resides in the nucleus. The protein localises to the chromosome. Its subcellular location is the cytoplasm. Its function is as follows. Chromatin reader that recognizes dual histone modifications such as histone H3.1 dimethylated at 'Lys-36' and histone H4 acetylated at 'Lys-16' (H3.1K36me2-H4K16ac) and histone H3 methylated at 'Lys-4' and histone H4 acetylated at 'Lys-14' (H3K4me1-H3K14ac). May act as a transcriptional corepressor for KDM5D by recognizing the dual histone signature H3K4me1-H3K14ac. May also act as a transcriptional corepressor for KDM5C and EZH2. Recognizes acetylated histone H4 and recruits the NuRD chromatin remodeling complex to damaged chromatin for transcriptional repression and double-strand break repair by homologous recombination. Also activates transcription elongation by RNA polymerase II through recruiting the P-TEFb complex to target promoters. Localizes to H3.1K36me2-H4K16ac marks at all-trans-retinoic acid (ATRA)-responsive genes and positively regulates their expression. Promotes neuronal differentiation by associating with regulatory regions within the MAPT gene, to enhance transcription of a protein-coding MAPT isoform and suppress the non-coding MAPT213 isoform. Suppresses breast cancer, and prostate cancer cell invasion and metastasis. This Homo sapiens (Human) protein is MYND-type zinc finger-containing chromatin reader ZMYND8 (ZMYND8).